A 325-amino-acid chain; its full sequence is Tetraacyldisaccharide 4'-kinase (325 aa).

55-62 (TAGGNGKT) contributes to the ATP binding site.

Belongs to the LpxK family.

It catalyses the reaction a lipid A disaccharide + ATP = a lipid IVA + ADP + H(+). It functions in the pathway glycolipid biosynthesis; lipid IV(A) biosynthesis; lipid IV(A) from (3R)-3-hydroxytetradecanoyl-[acyl-carrier-protein] and UDP-N-acetyl-alpha-D-glucosamine: step 6/6. In terms of biological role, transfers the gamma-phosphate of ATP to the 4'-position of a tetraacyldisaccharide 1-phosphate intermediate (termed DS-1-P) to form tetraacyldisaccharide 1,4'-bis-phosphate (lipid IVA). In Salmonella paratyphi B (strain ATCC BAA-1250 / SPB7), this protein is Tetraacyldisaccharide 4'-kinase.